The chain runs to 141 residues: Nucleoside triphosphatase NudI (141 aa).

The 141-residue stretch at Met1–Leu141 folds into the Nudix hydrolase domain. The Nudix box signature appears at Gly38 to Gly59.

This sequence belongs to the Nudix hydrolase family. NudI subfamily. In terms of assembly, monomer. Requires Mg(2+) as cofactor.

It carries out the reaction a ribonucleoside 5'-triphosphate + H2O = a ribonucleoside 5'-phosphate + diphosphate + H(+). The enzyme catalyses a 2'-deoxyribonucleoside 5'-triphosphate + H2O = a 2'-deoxyribonucleoside 5'-phosphate + diphosphate + H(+). It catalyses the reaction dUTP + H2O = dUMP + diphosphate + H(+). The catalysed reaction is dTTP + H2O = dTMP + diphosphate + H(+). It carries out the reaction dCTP + H2O = dCMP + diphosphate + H(+). Its function is as follows. Catalyzes the hydrolysis of nucleoside triphosphates, with a preference for pyrimidine deoxynucleoside triphosphates (dUTP, dTTP and dCTP). The sequence is that of Nucleoside triphosphatase NudI from Escherichia coli (strain ATCC 8739 / DSM 1576 / NBRC 3972 / NCIMB 8545 / WDCM 00012 / Crooks).